The following is a 381-amino-acid chain: MKIVIAPDSYKESLSASEVAQAIEKGFREIFPDAQYVSVPVADGGEGTVEAMIAATQGAERHAWVTGPLGEKVNASWGISGDGKTAFIEMAAASGLELVPAEKRDPLVTTSRGTGELILQALESGATNIIIGIGGSATNDGGAGMVQALGAKLCDANGNEIGFGGGSLNTLNDIDISGLDPRLKDCVIRVACDVTNPLVGDNGASRIFGPQKGASEAMIVELDNNLSHYAEVIKKALHVDVKDVPGAGAAGGMGAALMAFLGAELKSGIEIVTTALNLEEHIHDCTLVITGEGRIDSQSIHGKVPIGVANVAKKYHKPVIGIAGSLTDDVGVVHQHGIDAVFSVLTSIGTLDEAFRGAYDNICRASRNIAATLAIGMRNAG.

This sequence belongs to the glycerate kinase type-1 family.

The catalysed reaction is (R)-glycerate + ATP = (2R)-2-phosphoglycerate + ADP + H(+). Catalyzes the transfer of the phosphate group from adenosine triphosphate (ATP) to (R)-glycerate to form (2R)-2-phosphoglycerate, an enzymatic step in (L)-glucarate/galactarate catabolic pathway. In Escherichia coli (strain K12), this protein is Glycerate 2-kinase (garK).